A 364-amino-acid polypeptide reads, in one-letter code: Putative zinc metalloprotease all3971 (364 aa).

H17 is a binding site for Zn(2+). Residue E18 is part of the active site. H21 is a binding site for Zn(2+). A run of 3 helical transmembrane segments spans residues 92-114 (AIVI…LAQV), 281-303 (LFFF…LPAL), and 329-346 (VMQT…FLIV). One can recognise a PDZ domain in the interval 103 to 188 (LIFAYMLLLA…KSIQLTVARG (86 aa)).

This sequence belongs to the peptidase M50B family. It depends on Zn(2+) as a cofactor.

Its subcellular location is the cell inner membrane. The polypeptide is Putative zinc metalloprotease all3971 (Nostoc sp. (strain PCC 7120 / SAG 25.82 / UTEX 2576)).